A 582-amino-acid polypeptide reads, in one-letter code: DBIRD complex subunit ZNF326 (582 aa).

The segment at 1-124 (MDFEDDYTHS…YRNSLDSFGG (124 aa)) is mediates transcriptional activation. S48, S56, S63, S69, S81, S82, S91, S106, S114, S118, S121, and S137 each carry phosphoserine. K140 participates in a covalent cross-link: Glycyl lysine isopeptide (Lys-Gly) (interchain with G-Cter in SUMO2). The disordered stretch occupies residues 154-194 (YSSYSSFSSPHMKPAPVGSRGRGTPAYPESTFGSRNYDAFG). An Omega-N-methylarginine modification is found at R173. Position 212 is a phosphoserine (S212). R235 carries the omega-N-methylarginine modification. The Bipartite nuclear localization signal motif lies at 238 to 260 (KRKMMQPFNKPSGTFIKKPKLAK). K240 participates in a covalent cross-link: Glycyl lysine isopeptide (Lys-Gly) (interchain with G-Cter in SUMO2). Positions 243 to 302 (QPFNKPSGTFIKKPKLAKPMEKISLSKSPTKTDPKNEEEEKRRIEARREKQRRRREKNSE) are disordered. K247 is modified (N6-acetyllysine; alternate). K247 participates in a covalent cross-link: Glycyl lysine isopeptide (Lys-Gly) (interchain with G-Cter in SUMO2); alternate. The residue at position 249 (S249) is a Phosphoserine. T251 is modified (phosphothreonine). Residues K254 and K264 each participate in a glycyl lysine isopeptide (Lys-Gly) (interchain with G-Cter in SUMO2) cross-link. Position 270 is a phosphoserine (S270). The segment covering 272 to 290 (TKTDPKNEEEEKRRIEARR) has biased composition (basic and acidic residues). The segment at 314 to 336 (CSFCKFRTFEEKDIELHLESSSH) adopts a C2H2 AKAP95-type 1 zinc-finger fold. A Glycyl lysine isopeptide (Lys-Gly) (interchain with G-Cter in SUMO2) cross-link involves residue K401. Residues 407–430 (CSACSVYIPALHSSVQQHLKSPDH) form a C2H2 AKAP95-type 2 zinc finger. Glycyl lysine isopeptide (Lys-Gly) (interchain with G-Cter in SUMO2) cross-links involve residues K459 and K467. The tract at residues 472-582 (FEIQDHSQDQ…DFPVEQPEEN (111 aa)) is disordered. Over residues 483-523 (IEGDEEDEEKIDEPIEEEEDEDEEEEAEEVGEVEEVEEVEE) the composition is skewed to acidic residues. Residues 530–545 (EGEGNIQGVGEGGEVG) show a composition bias toward gly residues. Residues 552–567 (GVGEVEEVEELEEETA) are compositionally biased toward acidic residues.

The protein belongs to the AKAP95 family. Component of the DBIRD complex. Interacts with CCAR2; the interaction is direct.

Its subcellular location is the nucleus matrix. Its function is as follows. Core component of the DBIRD complex, a multiprotein complex that acts at the interface between core mRNP particles and RNA polymerase II (RNAPII) and integrates transcript elongation with the regulation of alternative splicing: the DBIRD complex affects local transcript elongation rates and alternative splicing of a large set of exons embedded in (A + T)-rich DNA regions. May play a role in neuronal differentiation and is able to bind DNA and activate expression in vitro. The chain is DBIRD complex subunit ZNF326 (ZNF326) from Homo sapiens (Human).